The chain runs to 558 residues: MAPFRSIYEKDATKKLVVGAALLVLAAFYSYVFLLTLAPVYGSTPSHIFHGYGVGIAGVAGWFSKDIVDRVSGRKAIYAIPVLAFFLPVVQYFVSQQSSALGNPAGPIFTEVLALYPLVLLSVACAGKLVQAGLNLQRHGDLVAEHIPLLGSYVIYSAGEHLIKAFLSRFIGSTVLLSRAGLQILIAIFYAAAVPSKALLLAIPAFLFSVTSNTHLPLGHTTTALNNIIADDGFALVARQDSTTGYISVLDNLEDGFRVMRCDHSLLGGQWIKKRPNYTPPAVKDPIYAVFTMLEAVRLVETAHGIPRADAGSNALVIGLGIGTTPGALISHGIDTTIVEIDPVVHKYALQYFDLPENHTPIIEDARAFVQRSRNAPQPKQYDYIVHDVFTGGAEPVELFTYEFISGLHALLKDDGVIAINYAGDISLYSTALSIRTIKSIFPTCRLFREAAAPEIGPDFTNMVIFCTKSRGAPITFRDPVPEDFLGSRFRSRYLVPKHEVDAAQFDNVGLEDGPQGHGRRVLVDKEVGRLHKYQDRSALEHWGIMRTVLPDRVWEGW.

The Cytoplasmic portion of the chain corresponds to 1–15 (MAPFRSIYEKDATKK). Residues 16–32 (LVVGAALLVLAAFYSYV) form a helical membrane-spanning segment. At 33 to 49 (FLLTLAPVYGSTPSHIF) the chain is on the lumenal side. A helical membrane pass occupies residues 50–65 (HGYGVGIAGVAGWFSK). Residues 66 to 77 (DIVDRVSGRKAI) lie on the Cytoplasmic side of the membrane. Residues 78 to 96 (YAIPVLAFFLPVVQYFVSQ) traverse the membrane as a helical segment. The Lumenal segment spans residues 97 to 104 (QSSALGNP). Residues 105-131 (AGPIFTEVLALYPLVLLSVACAGKLVQ) traverse the membrane as a helical segment. Over 132 to 145 (AGLNLQRHGDLVAE) the chain is Cytoplasmic. Residues 146-169 (HIPLLGSYVIYSAGEHLIKAFLSR) traverse the membrane as a helical segment. Topologically, residues 170-172 (FIG) are lumenal. Residues 173–194 (STVLLSRAGLQILIAIFYAAAV) form a helical membrane-spanning segment. Residues 195 to 197 (PSK) lie on the Cytoplasmic side of the membrane. The helical transmembrane segment at 198-215 (ALLLAIPAFLFSVTSNTH) threads the bilayer. Residues 216 to 558 (LPLGHTTTAL…VLPDRVWEGW (343 aa)) lie on the Lumenal side of the membrane.

It belongs to the methyltransferase superfamily.

It localises to the endoplasmic reticulum membrane. The catalysed reaction is L-histidyl-[protein] + S-adenosyl-L-methionine = N(tele)-methyl-L-histidyl-[protein] + S-adenosyl-L-homocysteine + H(+). Functionally, protein-histidine N-methyltransferase that specifically mediates 3-methylhistidine (tele-methylhistidine) methylation at 'His-1', which protects the side-chain from oxidative damage. Methylates lytic polysaccharide monooxygenases (LPMOs) destined for secretion, including AN4702. This Emericella nidulans (strain FGSC A4 / ATCC 38163 / CBS 112.46 / NRRL 194 / M139) (Aspergillus nidulans) protein is N-terminal histidine N-methyltransferase.